Consider the following 398-residue polypeptide: Dual-specificity RNA methyltransferase RlmN (398 aa).

Catalysis depends on glutamate 119, which acts as the Proton acceptor. The region spanning 125 to 364 (DGDRATLCVS…TIVRKTRGDD (240 aa)) is the Radical SAM core domain. An intrachain disulfide couples cysteine 132 to cysteine 369. Cysteine 139, cysteine 143, and cysteine 146 together coordinate [4Fe-4S] cluster. S-adenosyl-L-methionine contacts are provided by residues 193 to 194 (GE), serine 225, 247 to 249 (SLH), and asparagine 326. Catalysis depends on cysteine 369, which acts as the S-methylcysteine intermediate.

This sequence belongs to the radical SAM superfamily. RlmN family. It depends on [4Fe-4S] cluster as a cofactor.

It localises to the cytoplasm. It catalyses the reaction adenosine(2503) in 23S rRNA + 2 reduced [2Fe-2S]-[ferredoxin] + 2 S-adenosyl-L-methionine = 2-methyladenosine(2503) in 23S rRNA + 5'-deoxyadenosine + L-methionine + 2 oxidized [2Fe-2S]-[ferredoxin] + S-adenosyl-L-homocysteine. The enzyme catalyses adenosine(37) in tRNA + 2 reduced [2Fe-2S]-[ferredoxin] + 2 S-adenosyl-L-methionine = 2-methyladenosine(37) in tRNA + 5'-deoxyadenosine + L-methionine + 2 oxidized [2Fe-2S]-[ferredoxin] + S-adenosyl-L-homocysteine. Its function is as follows. Specifically methylates position 2 of adenine 2503 in 23S rRNA and position 2 of adenine 37 in tRNAs. m2A2503 modification seems to play a crucial role in the proofreading step occurring at the peptidyl transferase center and thus would serve to optimize ribosomal fidelity. The chain is Dual-specificity RNA methyltransferase RlmN from Serratia proteamaculans (strain 568).